A 107-amino-acid polypeptide reads, in one-letter code: Phosphoribosyl-ATP pyrophosphatase (107 aa).

Belongs to the PRA-PH family.

It is found in the cytoplasm. The enzyme catalyses 1-(5-phospho-beta-D-ribosyl)-ATP + H2O = 1-(5-phospho-beta-D-ribosyl)-5'-AMP + diphosphate + H(+). The protein operates within amino-acid biosynthesis; L-histidine biosynthesis; L-histidine from 5-phospho-alpha-D-ribose 1-diphosphate: step 2/9. This chain is Phosphoribosyl-ATP pyrophosphatase (hisE), found in Neisseria meningitidis serogroup A / serotype 4A (strain DSM 15465 / Z2491).